Consider the following 228-residue polypeptide: Protein K8.1 (228 aa).

Residues 1 to 26 form the signal peptide; it reads MSSTQIRTEIPVALLILCLCLVACHA. N-linked (GlcNAc...) asparagine; by host glycans are attached at residues N55, N60, N70, and N85. Positions 77-113 are disordered; it reads GSPSSEYPNVSVSVEDTSASGSGEDAIDESGSGEEER. Residues 78–97 show a composition bias toward polar residues; sequence SPSSEYPNVSVSVEDTSASG. The chain crosses the membrane as a helical span at residues 197-217; that stretch reads LYILWAVGLLLGLVLILYLCV.

The protein localises to the host membrane. The sequence is that of Protein K8.1 (K8.1) from Human herpesvirus 8 type P (isolate GK18) (HHV-8).